Reading from the N-terminus, the 423-residue chain is UDP-N-acetylglucosamine 1-carboxyvinyltransferase (423 aa).

Position 22-23 (Lys-22–Asn-23) interacts with phosphoenolpyruvate. UDP-N-acetyl-alpha-D-glucosamine is bound at residue Arg-98. Cys-122 serves as the catalytic Proton donor. Cys-122 carries the post-translational modification 2-(S-cysteinyl)pyruvic acid O-phosphothioketal. Residues Arg-127 to Gln-131, Asp-311, and Ile-333 each bind UDP-N-acetyl-alpha-D-glucosamine.

This sequence belongs to the EPSP synthase family. MurA subfamily.

It is found in the cytoplasm. The catalysed reaction is phosphoenolpyruvate + UDP-N-acetyl-alpha-D-glucosamine = UDP-N-acetyl-3-O-(1-carboxyvinyl)-alpha-D-glucosamine + phosphate. It participates in cell wall biogenesis; peptidoglycan biosynthesis. In terms of biological role, cell wall formation. Adds enolpyruvyl to UDP-N-acetylglucosamine. The protein is UDP-N-acetylglucosamine 1-carboxyvinyltransferase of Stenotrophomonas maltophilia (strain R551-3).